The sequence spans 475 residues: MDFQHRPGGKTGSGGVASSSESNRDRRERLRQLALETIDINKDPYFMKNHLGSYECKLCLTLHNNEGSYLAHTQGKKHQTNLARRAAKEAKEAPAQPAPEQVKVEVKKFVKIGRPGYKVTKQRDTEMGQQSLLFQIDYPEIAEGIMPRHRFMSAYEQRIEPPDRRWQYLLMAAEPYETIAFKVPSREIDKAEGKFFFLQFHFKMEKPPAPPSLPAGPPGVKRPPPPLMNGLPPRPPLPDALPPPPPGGLPLPPMPPTGPAPSGPPGPPQMPPPAPGVHPPAPVVHPPTSGVHPPAPGVHPPAPVVHPPTSGVHPPAPGVHPPTPGVHPPAPGVHPPAPGVHPPAPGVHPPTPGVHPPAPGVHPPAPGVHPPAPGVHPPPSAGVHPQAPGVHPPAPAVHPQAPGVHPPAPGIHPQAPGVHPQPPPGVHPAAPGVHPQPPGVHPSNPGVHPAPMPPMLRPPLPSDGPGNMPPPPPGN.

Met1 is modified (N-acetylmethionine). The disordered stretch occupies residues 1 to 27 (MDFQHRPGGKTGSGGVASSSESNRDRR). Lys10 is subject to N6-acetyllysine. The Matrin-type zinc-finger motif lies at 54–84 (YECKLCLTLHNNEGSYLAHTQGKKHQTNLAR). Residue Ser153 is modified to Phosphoserine. Pro residues-rich tracts occupy residues 208–285 (PAPP…PVVH), 293–306 (PPAPGVHPPAPVVH), 314–380 (PPAP…PPPS), and 448–475 (HPAPMPPMLRPPLPSDGPGNMPPPPPGN). The disordered stretch occupies residues 208 to 475 (PAPPSLPAGP…GNMPPPPPGN (268 aa)).

Belongs to the SF3A2 family. As to quaternary structure, component of the 17S U2 SnRNP complex, a ribonucleoprotein complex that contains small nuclear RNA (snRNA) U2 and a number of specific proteins. Part of the SF3A subcomplex of the 17S U2 SnRNP complex which is composed of three subunits; SF3A3/SAP61, SF3A2/SAP62 and SF3A1/SAP114. SF3A associates with the splicing factor SF3B and a 12S RNA unit to form the mature 17S U2 small nuclear ribonucleoprotein complex (17S U2 snRNP). Identified in the spliceosome 'E' complex, a precursor of the spliceosome 'A' complex. Identified in the spliceosome 'A' and 'B' complexes. Identified in the spliceosome 'C' complex. Interacts with HTATSF1. Found in all tissues examined.

Its subcellular location is the nucleus. Its function is as follows. Component of the 17S U2 SnRNP complex of the spliceosome, a large ribonucleoprotein complex that removes introns from transcribed pre-mRNAs. The 17S U2 SnRNP complex (1) directly participates in early spliceosome assembly and (2) mediates recognition of the intron branch site during pre-mRNA splicing by promoting the selection of the pre-mRNA branch-site adenosine, the nucleophile for the first step of splicing. Within the 17S U2 SnRNP complex, SF3A2 is part of the SF3A subcomplex that contributes to the assembly of the 17S U2 snRNP, and the subsequent assembly of the pre-spliceosome 'E' complex and the pre-catalytic spliceosome 'A' complex. Involved in pre-mRNA splicing as a component of pre-catalytic spliceosome 'B' complexes, including the Bact complex. Interacts directly with the duplex formed by U2 snRNA and the intron. In Mus musculus (Mouse), this protein is Splicing factor 3A subunit 2 (Sf3a2).